The primary structure comprises 549 residues: OBERON-like protein (549 aa).

Positions 1-56 (MLPPRQQPRPGGLQTSLSLVSPDACGSPNPQERGSTSDQARDSPSESASSRETWPT) are disordered. Polar residues-rich tracts occupy residues 28-38 (PNPQERGSTSD) and 45-56 (SESASSRETWPT). The PHD-type zinc-finger motif lies at 224–288 (LCMCVICYKF…LFRCHACSRT (65 aa)). Positions 394–520 (VQEAIRKMEA…YLFEKIKLQE (127 aa)) form a coiled coil. The interval 519–549 (QESSRASQSSAGGNDPSQMMYSKIQDLIKNM) is disordered. Residues 521–538 (SSRASQSSAGGNDPSQMM) show a composition bias toward polar residues.

As to quaternary structure, self-interacts and probably forms heteromers. Binds to VPg of pea seed borne mosaic virus (PSbMV), turnip mosaic virus (TuMV) and lettuce mosaic virus (LMV), but not with VPg of tobacco etch virus (TEV), cowpea mosaic virus (CPMV), tomato black ring virus (TBRV) and grapevine fan leaf virus (GFLV).

Its subcellular location is the nucleus. Functionally, required for the maintenance and/or establishment of both the shoot and root meristems, probably by controlling the expression of the meristem genes and of genes required for auxin responses. Involved in the development of the basal pole and in auxin-mediated root and vascular development in the embryo. Confers sensitivity to turnip mosaic virus (TuMV) probably by promoting viral movement and multiplication via interaction with TuMV VPg. In Nicotiana benthamiana, this protein is OBERON-like protein (PVIP).